Consider the following 157-residue polypeptide: Peptide methionine sulfoxide reductase MsrA (157 aa).

The active site involves Cys10.

Belongs to the MsrA Met sulfoxide reductase family.

The enzyme catalyses L-methionyl-[protein] + [thioredoxin]-disulfide + H2O = L-methionyl-(S)-S-oxide-[protein] + [thioredoxin]-dithiol. It catalyses the reaction [thioredoxin]-disulfide + L-methionine + H2O = L-methionine (S)-S-oxide + [thioredoxin]-dithiol. Its function is as follows. Has an important function as a repair enzyme for proteins that have been inactivated by oxidation. Catalyzes the reversible oxidation-reduction of methionine sulfoxide in proteins to methionine. In Clostridium botulinum (strain Kyoto / Type A2), this protein is Peptide methionine sulfoxide reductase MsrA.